The chain runs to 279 residues: Diaminopimelate epimerase 1 (279 aa).

Substrate contacts are provided by asparagine 13 and asparagine 66. Cysteine 75 acts as the Proton donor in catalysis. Substrate is bound by residues 76-77 (GN), asparagine 164, asparagine 197, and 215-216 (ER). Cysteine 224 acts as the Proton acceptor in catalysis. Residue 225 to 226 (GT) coordinates substrate.

The protein belongs to the diaminopimelate epimerase family. As to quaternary structure, homodimer.

The protein resides in the cytoplasm. It carries out the reaction (2S,6S)-2,6-diaminopimelate = meso-2,6-diaminopimelate. It participates in amino-acid biosynthesis; L-lysine biosynthesis via DAP pathway; DL-2,6-diaminopimelate from LL-2,6-diaminopimelate: step 1/1. Its function is as follows. Catalyzes the stereoinversion of LL-2,6-diaminopimelate (L,L-DAP) to meso-diaminopimelate (meso-DAP), a precursor of L-lysine and an essential component of the bacterial peptidoglycan. The sequence is that of Diaminopimelate epimerase 1 from Nostoc sp. (strain PCC 7120 / SAG 25.82 / UTEX 2576).